The chain runs to 369 residues: Hsc70-interacting protein (369 aa).

The interval 38-97 (MGGKVPPATQKAKSEENTKEEKPDSKKVEEDLKADEPSSEESDLEIDKEGVIEPDTDAPQ) is disordered. The span at 49-73 (AKSEENTKEEKPDSKKVEEDLKADE) shows a compositional bias: basic and acidic residues. TPR repeat units follow at residues 114 to 147 (ANDK…NPRL), 148 to 181 (AILY…NPDS), and 182 to 215 (AQPY…DYDE). The segment covering 256-272 (KAREEHERAQREEEARR) has biased composition (basic and acidic residues). Residues 256–300 (KAREEHERAQREEEARRQSGAQYGSFPGGFPGGMPGNFPGGMPGM) are disordered. Residues 281 to 300 (FPGGFPGGMPGNFPGGMPGM) show a composition bias toward gly residues. The STI1 domain occupies 319 to 358 (DPEVLAAMQDPEVMVAFQDVAQNPANMSKYQSNPKVMNLI). At Ser346 the chain carries Phosphoserine; by GRK5. 2 positions are modified to N6-acetyllysine: Lys353 and Lys360.

The protein belongs to the FAM10 family. In terms of assembly, homotetramer. Interacts with HSC70 as well as DNAJ homologs and HSP90. Interacts (via the C-terminus 303- 319 AA) with GRK5.

Its subcellular location is the cytoplasm. Its function is as follows. One HIP oligomer binds the ATPase domains of at least two HSC70 molecules dependent on activation of the HSC70 ATPase by HSP40. Stabilizes the ADP state of HSC70 that has a high affinity for substrate protein. Through its own chaperone activity, it may contribute to the interaction of HSC70 with various target proteins. This is Hsc70-interacting protein (ST13) from Homo sapiens (Human).